The following is a 190-amino-acid chain: dCTP deaminase, dUMP-forming (190 aa).

Residues 101-106 (KSSLGR), Asp-119, 127-129 (TLE), Gln-148, Tyr-162, Lys-170, and Gln-174 contribute to the dCTP site. The Proton donor/acceptor role is filled by Glu-129. The tract at residues 160–190 (HPYGSSRAGSKYQGQRGPTPSRSYQNFIRST) is disordered. A compositionally biased stretch (polar residues) spans 171 to 190 (YQGQRGPTPSRSYQNFIRST).

Belongs to the dCTP deaminase family. As to quaternary structure, homotrimer.

It catalyses the reaction dCTP + 2 H2O = dUMP + NH4(+) + diphosphate. Its pathway is pyrimidine metabolism; dUMP biosynthesis; dUMP from dCTP: step 1/1. Functionally, bifunctional enzyme that catalyzes both the deamination of dCTP to dUTP and the hydrolysis of dUTP to dUMP without releasing the toxic dUTP intermediate. The chain is dCTP deaminase, dUMP-forming from Mycobacterium tuberculosis (strain ATCC 25177 / H37Ra).